The chain runs to 293 residues: Urease accessory protein UreD (293 aa).

A disordered region spans residues 1-22 (MAVAQQAWSPGADPAPSAAPVS). Positions 7–22 (AWSPGADPAPSAAPVS) are enriched in low complexity.

The protein belongs to the UreD family. As to quaternary structure, ureD, UreF and UreG form a complex that acts as a GTP-hydrolysis-dependent molecular chaperone, activating the urease apoprotein by helping to assemble the nickel containing metallocenter of UreC. The UreE protein probably delivers the nickel.

The protein resides in the cytoplasm. Functionally, required for maturation of urease via the functional incorporation of the urease nickel metallocenter. This Alkalilimnicola ehrlichii (strain ATCC BAA-1101 / DSM 17681 / MLHE-1) protein is Urease accessory protein UreD.